Consider the following 80-residue polypeptide: Exodeoxyribonuclease 7 small subunit (80 aa).

It belongs to the XseB family. As to quaternary structure, heterooligomer composed of large and small subunits.

Its subcellular location is the cytoplasm. It carries out the reaction Exonucleolytic cleavage in either 5'- to 3'- or 3'- to 5'-direction to yield nucleoside 5'-phosphates.. Its function is as follows. Bidirectionally degrades single-stranded DNA into large acid-insoluble oligonucleotides, which are then degraded further into small acid-soluble oligonucleotides. This chain is Exodeoxyribonuclease 7 small subunit, found in Pseudomonas fluorescens (strain SBW25).